Consider the following 201-residue polypeptide: MDKFTTLTGIAAPMPLVNIDTDMIIPKQFLKTIHRSGLGKNLFDEMRYNPDGSEIPDFVLNQPAYRESQIIVAGDNFGCGSSREHAPWALLDFGIRCVISTSFADIFYNNCFKNGILPIVMPQEVVDVLMEDAKKGANARMTVDLENLTVTTSDGQSFPFELDPFRRHCLLNGLDDIGLTMEKAGAIDTYEAQMAQSRPWV.

Belongs to the LeuD family. LeuD type 1 subfamily. Heterodimer of LeuC and LeuD.

It carries out the reaction (2R,3S)-3-isopropylmalate = (2S)-2-isopropylmalate. It participates in amino-acid biosynthesis; L-leucine biosynthesis; L-leucine from 3-methyl-2-oxobutanoate: step 2/4. In terms of biological role, catalyzes the isomerization between 2-isopropylmalate and 3-isopropylmalate, via the formation of 2-isopropylmaleate. In Paracoccus denitrificans (strain Pd 1222), this protein is 3-isopropylmalate dehydratase small subunit.